Here is a 304-residue protein sequence, read N- to C-terminus: tRNA pseudouridine synthase B (304 aa).

D38 serves as the catalytic Nucleophile.

This sequence belongs to the pseudouridine synthase TruB family. Type 1 subfamily.

The enzyme catalyses uridine(55) in tRNA = pseudouridine(55) in tRNA. Functionally, responsible for synthesis of pseudouridine from uracil-55 in the psi GC loop of transfer RNAs. This is tRNA pseudouridine synthase B from Listeria monocytogenes serotype 4b (strain F2365).